We begin with the raw amino-acid sequence, 157 residues long: Deoxyuridine 5'-triphosphate nucleotidohydrolase (157 aa).

Residues Ser63, Gly76, Asp79, Tyr82, Lys87, Arg132, Phe137, and Gly138 each contribute to the dUMP site. Residues 125-157 (NDLESTERGAGGFGSTGINDEKKRKLDEAEAKE) are disordered. The span at 143–157 (NDEKKRKLDEAEAKE) shows a compositional bias: basic and acidic residues.

The protein belongs to the dUTPase family. As to quaternary structure, homotrimer. Mg(2+) is required as a cofactor.

It carries out the reaction dUTP + H2O = dUMP + diphosphate + H(+). The protein operates within pyrimidine metabolism; dUMP biosynthesis; dUMP from dCTP (dUTP route): step 2/2. Functionally, involved in nucleotide metabolism via production of dUMP, the immediate precursor of thymidine nucleotides, and decreases the intracellular concentration of dUTP so that uracil cannot be incorporated into DNA. The polypeptide is Deoxyuridine 5'-triphosphate nucleotidohydrolase (DUT1) (Yarrowia lipolytica (strain CLIB 122 / E 150) (Yeast)).